Consider the following 76-residue polypeptide: Antimicrobial peptide lumbricin-1 (76 aa).

Positions 1 to 14 are cleaved as a propeptide — removed in mature form; sequence MSLCISDYLYLTLT.

Its function is as follows. Displays antimicrobial activity against the Gram-positive bacteria B.subtilis ATCC 62037, S.aureus ATCC 15752 and S.mutans ATCC 25175, the Gram-negative bacteria E.coli ATCC 27325, P.putida ATCC 17426 and Serratia sp. ATCC 21074, and the fungi C.albicans ATCC 10231, C.neoformans ATCC 34881 and S.cerevisiae ATCC 44774. Does not possess hemolytic activity. This is Antimicrobial peptide lumbricin-1 from Lumbricus rubellus (Humus earthworm).